The primary structure comprises 62 residues: Large ribosomal subunit protein bL28 (62 aa).

Belongs to the bacterial ribosomal protein bL28 family.

The protein is Large ribosomal subunit protein bL28 of Halalkalibacterium halodurans (strain ATCC BAA-125 / DSM 18197 / FERM 7344 / JCM 9153 / C-125) (Bacillus halodurans).